The primary structure comprises 282 residues: MLERTQRTLKREVRYSGVGIHLGKSSTLHLQPAQTNTGIVFQRQSASGNYENVPALLDHVYTTGRSTTLSRGSAVIATVEHLMAALRSNNIDNLIIQCSGEEIPIGDGSSNVFVELIDQAGICEQEDKVSIARLTRPVYYQHQDIFLAAFPSDELKISYTLHYPQSSTIGTQYKSLVINEESFRQEIAPCRTFALYNELCFLMEKGLIGGGCLDNAVVFKDDGIISRGQLRFADEPVRHKILDLIGDLSLVGRPFVAHVLAVGSGHSSNIAFGKKILEALEL.

3 residues coordinate Zn(2+): His-81, His-239, and Asp-243. His-266 serves as the catalytic Proton donor.

Belongs to the LpxC family. Requires Zn(2+) as cofactor.

It carries out the reaction a UDP-3-O-[(3R)-3-hydroxyacyl]-N-acetyl-alpha-D-glucosamine + H2O = a UDP-3-O-[(3R)-3-hydroxyacyl]-alpha-D-glucosamine + acetate. The protein operates within glycolipid biosynthesis; lipid IV(A) biosynthesis; lipid IV(A) from (3R)-3-hydroxytetradecanoyl-[acyl-carrier-protein] and UDP-N-acetyl-alpha-D-glucosamine: step 2/6. In terms of biological role, catalyzes the hydrolysis of UDP-3-O-myristoyl-N-acetylglucosamine to form UDP-3-O-myristoylglucosamine and acetate, the committed step in lipid A biosynthesis. In Chlamydia pneumoniae (Chlamydophila pneumoniae), this protein is UDP-3-O-acyl-N-acetylglucosamine deacetylase.